We begin with the raw amino-acid sequence, 424 residues long: G1/S-specific cyclin-E (424 aa).

The disordered stretch occupies residues 1–25 (MSRRSGRLQSRQDNQPLTECISDEN). A compositionally biased stretch (polar residues) spans 7–17 (RLQSRQDNQPL). Residue threonine 411 is modified to Phosphothreonine.

Belongs to the cyclin family. Cyclin E subfamily. In terms of assembly, interacts with a member of the CDK2/CDK protein kinases to form a serine/threonine kinase holoenzyme complex. The cyclin subunit imparts substrate specificity to the complex.

Its subcellular location is the nucleus. In terms of biological role, essential for the control of the cell cycle at the G1/S (start) transition. This is G1/S-specific cyclin-E (CYCE) from Hemicentrotus pulcherrimus (Sea urchin).